The sequence spans 562 residues: DNA ligase (562 aa).

ATP is bound at residue E252. The N6-AMP-lysine intermediate role is filled by K254. Positions 259, 274, 303, 343, 419, and 425 each coordinate ATP.

This sequence belongs to the ATP-dependent DNA ligase family. The cofactor is Mg(2+).

The catalysed reaction is ATP + (deoxyribonucleotide)n-3'-hydroxyl + 5'-phospho-(deoxyribonucleotide)m = (deoxyribonucleotide)n+m + AMP + diphosphate.. DNA ligase that seals nicks in double-stranded DNA during DNA replication, DNA recombination and DNA repair. This chain is DNA ligase, found in Methanococcus aeolicus (strain ATCC BAA-1280 / DSM 17508 / OCM 812 / Nankai-3).